The primary structure comprises 202 residues: Recombination protein RecR (202 aa).

Residues 57 to 72 (CRDCRTFTEDDICAVC) form a C4-type zinc finger. Residues 81 to 176 (GQICVVESPA…PATRIAHGVP (96 aa)) enclose the Toprim domain.

It belongs to the RecR family.

Its function is as follows. May play a role in DNA repair. It seems to be involved in an RecBC-independent recombinational process of DNA repair. It may act with RecF and RecO. The chain is Recombination protein RecR from Photobacterium profundum (strain SS9).